The primary structure comprises 303 residues: MPATAPTWDPAQYLRHAGHRARPFTDLLARIPDLPADPPRIADLGCGPGNVTVLLADRWPTARITGYDNSPRMLERARQYAGPTSGGGHLDFAPADARSWTPDEPCDLLVSNATLQWVPGHADLFPGWIDRLAPGGTLALQVPGNFDAPSHRLMRELADSRRWRERLAGVLRHDDAVLTPEGYLAHLTAAGCTADVWETTYVHLLPGDDAVLDWVRGTGLRPVLDALDGDPAARDAFVDEYRAVLRAAYPAQAHGTPFPFRRVFAVARKPEGSGGSGGSGGSAGSAGCAGSGGSVGPAGEAGR.

The disordered stretch occupies residues 271–303; sequence EGSGGSGGSGGSAGSAGCAGSGGSVGPAGEAGR. Positions 272-303 are enriched in gly residues; that stretch reads GSGGSGGSGGSAGSAGCAGSGGSVGPAGEAGR.

The protein belongs to the methyltransferase superfamily. Tam family.

The protein localises to the cytoplasm. The enzyme catalyses trans-aconitate + S-adenosyl-L-methionine = (E)-3-(methoxycarbonyl)pent-2-enedioate + S-adenosyl-L-homocysteine. Functionally, catalyzes the S-adenosylmethionine monomethyl esterification of trans-aconitate. The sequence is that of Trans-aconitate 2-methyltransferase from Streptomyces coelicolor (strain ATCC BAA-471 / A3(2) / M145).